A 385-amino-acid chain; its full sequence is Probable alginate O-acetylase AlgJ (385 aa).

The N-terminal stretch at 1 to 21 (MTRTLRITYSLSFLGLLVGMG) is a signal peptide. The active site involves D190. The Proton acceptor role is filled by H192. The Nucleophile role is filled by S288.

It belongs to the AlgJ family.

The protein localises to the cell inner membrane. Its subcellular location is the periplasm. The protein operates within glycan biosynthesis; alginate biosynthesis. Together with AlgI and AlgF, forms an inner membrane complex which probably interacts with the alginate polymerization-transport complex and adds acetyl groups at the O-2 and O-3 positions of mannuronate residues. Acetylation of alginate is important for the architecture of biofilms and increases the ability of alginate to act as a defense barrier. The chain is Probable alginate O-acetylase AlgJ (algJ) from Pseudomonas putida (strain ATCC 47054 / DSM 6125 / CFBP 8728 / NCIMB 11950 / KT2440).